Reading from the N-terminus, the 389-residue chain is MTNKTITLNLGPQHPATHGVLRLILEMDGEVVNNADPHIGLLHRGTEKLIEHKTYLQAIPYFDRLDYVSPMCQEHAFALAVESLLECSVPRRAQFIRVLFSELTRILNHTLNIGSQALDIGATTPLLWLFEEREKIMEFYERVSGSRMHANYFRPGGVAEDLPEKLLEDINKFIEQFPSKLNDIENLLNENRLWKQRLVDIGVVSQKDAMDWGFSGPMLRGSGIAWDLRKSNPYDVYDEMDFEVPVGKNGDCYDRYLVRILEMYESIKIIKQCIAKMPKGQVKTDNPKLTPPTREKMKESMEAMIHHFKLYTEGYDVPIGETYKAVEAPKGEFGVYLYSQGGNKPYRCRIKAPGFAHLQGLNFMSKGHLISDVITIIATLDIVFGEIDR.

The protein belongs to the complex I 49 kDa subunit family. In terms of assembly, NDH-1 is composed of 14 different subunits. Subunits NuoB, C, D, E, F, and G constitute the peripheral sector of the complex.

The protein localises to the cell inner membrane. The enzyme catalyses a quinone + NADH + 5 H(+)(in) = a quinol + NAD(+) + 4 H(+)(out). Its function is as follows. NDH-1 shuttles electrons from NADH, via FMN and iron-sulfur (Fe-S) centers, to quinones in the respiratory chain. The immediate electron acceptor for the enzyme in this species is believed to be ubiquinone. Couples the redox reaction to proton translocation (for every two electrons transferred, four hydrogen ions are translocated across the cytoplasmic membrane), and thus conserves the redox energy in a proton gradient. This chain is NADH-quinone oxidoreductase subunit D, found in Rickettsia typhi (strain ATCC VR-144 / Wilmington).